The chain runs to 87 residues: U9-ctenitoxin-Pn1a (87 aa).

Residues 1-22 (MWLKTQLFVLAIAVIALLEVHA) form the signal peptide. Residues 23–37 (EPESNDNNELVVEEA) constitute a propeptide that is removed on maturation. Cystine bridges form between C40-C54, C47-C64, C53-C73, and C66-C71. The propeptide occupies 75-87 (KSLREMAAAAFGR).

It belongs to the neurotoxin 02 (plectoxin) family. 01 (Tx3) subfamily. As to expression, expressed by the venom gland.

Its subcellular location is the secreted. In terms of biological role, antagonist of L-type calcium channels (Cav1/CACNA1). This chain is U9-ctenitoxin-Pn1a, found in Phoneutria nigriventer (Brazilian armed spider).